Consider the following 629-residue polypeptide: tRNA uridine 5-carboxymethylaminomethyl modification enzyme MnmG (629 aa).

Residues 14 to 19 (GAGHAG), V126, and S181 each bind FAD. 273–287 (GPRYCPSIEDKVVRF) lines the NAD(+) pocket. FAD is bound at residue Q370.

It belongs to the MnmG family. In terms of assembly, homodimer. Heterotetramer of two MnmE and two MnmG subunits. FAD serves as cofactor.

The protein localises to the cytoplasm. In terms of biological role, NAD-binding protein involved in the addition of a carboxymethylaminomethyl (cmnm) group at the wobble position (U34) of certain tRNAs, forming tRNA-cmnm(5)s(2)U34. The polypeptide is tRNA uridine 5-carboxymethylaminomethyl modification enzyme MnmG (Geobacillus kaustophilus (strain HTA426)).